The primary structure comprises 365 residues: DNA polymerase IV 1 (365 aa).

Residues 6–196 (VLHIDMDYFF…LNVSKLWGIG (191 aa)) form the UmuC domain. Mg(2+) is bound by residues aspartate 10 and aspartate 113. Glutamate 114 is an active-site residue.

This sequence belongs to the DNA polymerase type-Y family. Monomer. Mg(2+) is required as a cofactor.

It is found in the cytoplasm. The enzyme catalyses DNA(n) + a 2'-deoxyribonucleoside 5'-triphosphate = DNA(n+1) + diphosphate. Functionally, poorly processive, error-prone DNA polymerase involved in untargeted mutagenesis. Copies undamaged DNA at stalled replication forks, which arise in vivo from mismatched or misaligned primer ends. These misaligned primers can be extended by PolIV. Exhibits no 3'-5' exonuclease (proofreading) activity. May be involved in translesional synthesis. This Methanosarcina mazei (strain ATCC BAA-159 / DSM 3647 / Goe1 / Go1 / JCM 11833 / OCM 88) (Methanosarcina frisia) protein is DNA polymerase IV 1 (dbh1).